Here is a 402-residue protein sequence, read N- to C-terminus: Large ribosomal subunit protein uL3 (402 aa).

A disordered region spans residues 1 to 35; the sequence is MSHRKFSAPRHGSMGFTPKKRSKRHRGKVKAFPKD. Over residues 18-31 the composition is skewed to basic residues; that stretch reads PKKRSKRHRGKVKA.

This sequence belongs to the universal ribosomal protein uL3 family.

The protein resides in the cytoplasm. Its function is as follows. The L3 protein is a component of the large subunit of cytoplasmic ribosomes. The protein is Large ribosomal subunit protein uL3 (RPL3) of Toxocara canis (Canine roundworm).